The following is a 288-amino-acid chain: Polyamine aminopropyltransferase (288 aa).

One can recognise a PABS domain in the interval 9 to 238 (ETLHDQFGQY…GIMTFAWATD (230 aa)). Gln-33 is an S-methyl-5'-thioadenosine binding site. Spermidine is bound by residues His-64 and Asp-88. Residues Glu-108 and 140–141 (DG) each bind S-methyl-5'-thioadenosine. Asp-158 acts as the Proton acceptor in catalysis. Residue 158 to 161 (DCTD) coordinates spermidine. Residue Pro-165 coordinates S-methyl-5'-thioadenosine.

This sequence belongs to the spermidine/spermine synthase family. As to quaternary structure, homodimer or homotetramer.

The protein localises to the cytoplasm. It catalyses the reaction S-adenosyl 3-(methylsulfanyl)propylamine + putrescine = S-methyl-5'-thioadenosine + spermidine + H(+). Its pathway is amine and polyamine biosynthesis; spermidine biosynthesis; spermidine from putrescine: step 1/1. Catalyzes the irreversible transfer of a propylamine group from the amino donor S-adenosylmethioninamine (decarboxy-AdoMet) to putrescine (1,4-diaminobutane) to yield spermidine. This Shigella boydii serotype 18 (strain CDC 3083-94 / BS512) protein is Polyamine aminopropyltransferase.